We begin with the raw amino-acid sequence, 110 residues long: MKFVLLFGVLLVTLFSYSSAEMFDDFDQADEDELLSLIEKEEARKDCIPKHHECTNNKHGCCRGHLFKYKCQCTTVVTQSGEETERCFCGTPPHHKAAELVVGFGKKIFG.

The N-terminal stretch at 1 to 20 is a signal peptide; the sequence is MKFVLLFGVLLVTLFSYSSA. The propeptide occupies 21-44; sequence EMFDDFDQADEDELLSLIEKEEAR. 4 cysteine pairs are disulfide-bonded: Cys-47–Cys-62, Cys-54–Cys-71, Cys-61–Cys-89, and Cys-73–Cys-87.

It belongs to the neurotoxin 19 (CSTX) family. 03 subfamily. Expressed by the venom gland.

It localises to the secreted. In Lycosa singoriensis (Wolf spider), this protein is U1-lycotoxin-Ls1kk.